Reading from the N-terminus, the 92-residue chain is Protein AC152 (92 aa).

Functionally, acts as a transactivator of AC102 and HE65 genes. Therefore, participates in the global recruitment of G-actin to the host nucleus. The polypeptide is Protein AC152 (AC152) (Autographa californica nuclear polyhedrosis virus (AcMNPV)).